We begin with the raw amino-acid sequence, 203 residues long: MPHTLPALPYAYDALEPHIDAQTMEIHHTKHHQTYVNGLNAAIEGTEWAEWPVEKLVGAVKQLPESLRGAVTNHGGGHANHSLFWTVMSPQGGGEPHGQLAQAIASQLGGFDAFKEAFTKAALTRFGSGWAWLSVTPQKTLVVESSGNQDSPLMFGNTPIFGLDVWEHAYYLKYQNRRPEYIGAFYNVIDWAEVERRYLEALK.

Residues His-27, His-81, Asp-164, and His-168 each contribute to the Mn(2+) site.

The protein belongs to the iron/manganese superoxide dismutase family. In terms of assembly, homodimer. Mn(2+) serves as cofactor.

The enzyme catalyses 2 superoxide + 2 H(+) = H2O2 + O2. Destroys superoxide anion radicals which are normally produced within the cells and which are toxic to biological systems. In Pseudomonas putida (Arthrobacter siderocapsulatus), this protein is Superoxide dismutase [Mn] (sodA).